A 188-amino-acid polypeptide reads, in one-letter code: mRNA transport factor GFD1 (188 aa).

The segment at Met1–Ser128 is disordered. Over residues Lys18 to Asn28 the composition is skewed to basic residues. The segment covering Asn29–Asn44 has biased composition (low complexity). Residues Gly59–Pro79 are compositionally biased toward basic and acidic residues. A phosphoserine mark is found at Ser87, Ser106, and Ser111. Residues Pro112–Ser128 are compositionally biased toward low complexity. The stretch at Lys119–Glu164 forms a coiled coil.

Interacts with GLE1, NUP42, NAB2, ZDS1 and probably DBP5. Forms a complex with GLE1 and NAB2.

It is found in the cytoplasm. The protein localises to the nucleus. The protein resides in the nuclear pore complex. Its subcellular location is the nucleus membrane. Its function is as follows. High-copy suppressor of mutant alleles of ATP-dependent RNA helicase DBP5, which is involved in mRNA export from the nucleus. It may also play an important role in a late stage of NAB2-mRNA export. The sequence is that of mRNA transport factor GFD1 (GFD1) from Saccharomyces cerevisiae (strain ATCC 204508 / S288c) (Baker's yeast).